Reading from the N-terminus, the 348-residue chain is Holliday junction branch migration complex subunit RuvB (348 aa).

The segment at 1-182 (MRIELLNTPA…FGINSRFDYY (182 aa)) is large ATPase domain (RuvB-L). ATP contacts are provided by residues Ile21, Arg22, Gly63, Lys66, Thr67, Thr68, 129–131 (EDF), Arg172, Tyr182, and Arg219. Position 67 (Thr67) interacts with Mg(2+). The interval 183 to 253 (SADLLEKIII…IAMTTLDCLE (71 aa)) is small ATPAse domain (RuvB-S). Residues 256–348 (EEGLDDMDKK…EFPLEDDQRQ (93 aa)) are head domain (RuvB-H). Residues Arg311 and Arg316 each coordinate DNA.

The protein belongs to the RuvB family. In terms of assembly, homohexamer. Forms an RuvA(8)-RuvB(12)-Holliday junction (HJ) complex. HJ DNA is sandwiched between 2 RuvA tetramers; dsDNA enters through RuvA and exits via RuvB. An RuvB hexamer assembles on each DNA strand where it exits the tetramer. Each RuvB hexamer is contacted by two RuvA subunits (via domain III) on 2 adjacent RuvB subunits; this complex drives branch migration. In the full resolvosome a probable DNA-RuvA(4)-RuvB(12)-RuvC(2) complex forms which resolves the HJ.

Its subcellular location is the cytoplasm. It carries out the reaction ATP + H2O = ADP + phosphate + H(+). In terms of biological role, the RuvA-RuvB-RuvC complex processes Holliday junction (HJ) DNA during genetic recombination and DNA repair, while the RuvA-RuvB complex plays an important role in the rescue of blocked DNA replication forks via replication fork reversal (RFR). RuvA specifically binds to HJ cruciform DNA, conferring on it an open structure. The RuvB hexamer acts as an ATP-dependent pump, pulling dsDNA into and through the RuvAB complex. RuvB forms 2 homohexamers on either side of HJ DNA bound by 1 or 2 RuvA tetramers; 4 subunits per hexamer contact DNA at a time. Coordinated motions by a converter formed by DNA-disengaged RuvB subunits stimulates ATP hydrolysis and nucleotide exchange. Immobilization of the converter enables RuvB to convert the ATP-contained energy into a lever motion, pulling 2 nucleotides of DNA out of the RuvA tetramer per ATP hydrolyzed, thus driving DNA branch migration. The RuvB motors rotate together with the DNA substrate, which together with the progressing nucleotide cycle form the mechanistic basis for DNA recombination by continuous HJ branch migration. Branch migration allows RuvC to scan DNA until it finds its consensus sequence, where it cleaves and resolves cruciform DNA. In Chlorobium limicola (strain DSM 245 / NBRC 103803 / 6330), this protein is Holliday junction branch migration complex subunit RuvB.